The primary structure comprises 727 residues: Glycerol-3-phosphate dehydrogenase, mitochondrial (727 aa).

The transit peptide at 1–42 (MAFQKVVKGTILMGGGALATVLGLSQFAHYRRKQVSLAYVEA) directs the protein to the mitochondrion. 71–99 (DILVIGGGATGCGCALDAVTRGLKTALVE) is a binding site for FAD. Phosphotyrosine is present on Y601. EF-hand domains lie at 623 to 658 (PDIDRYKKRFHMFDEDEKGFITIVDVQRVLESINVQ) and 659 to 694 (MDEDTLHEILCEVDLNKNGQVELHEFLQLMSAVHTG). Residues D672, N674, N676, Q678, and E683 each contribute to the Ca(2+) site.

It belongs to the FAD-dependent glycerol-3-phosphate dehydrogenase family. The cofactor is FAD.

It localises to the mitochondrion. The catalysed reaction is a quinone + sn-glycerol 3-phosphate = dihydroxyacetone phosphate + a quinol. The protein operates within polyol metabolism; glycerol degradation via glycerol kinase pathway; glycerone phosphate from sn-glycerol 3-phosphate (anaerobic route): step 1/1. Calcium-binding enhance the activity of the enzyme. Its function is as follows. Calcium-responsive mitochondrial glycerol-3-phosphate dehydrogenase which seems to be a key component of the pancreatic beta-cell glucose-sensing device. The chain is Glycerol-3-phosphate dehydrogenase, mitochondrial from Rattus norvegicus (Rat).